The chain runs to 251 residues: Flagellar brake protein YcgR (251 aa).

The 113-residue stretch at 127-239 (QRRDGFRVRP…ASRTLQRYID (113 aa)) folds into the PilZ domain.

It belongs to the YcgR family. Monomer. Interacts with the flagellar basal bodies.

It localises to the bacterial flagellum basal body. Its function is as follows. Acts as a flagellar brake, regulating swimming and swarming in a bis-(3'-5') cyclic diguanylic acid (c-di-GMP)-dependent manner. Binds 1 c-di-GMP dimer per subunit. Increasing levels of c-di-GMP lead to decreased motility. This Leptothrix cholodnii (strain ATCC 51168 / LMG 8142 / SP-6) (Leptothrix discophora (strain SP-6)) protein is Flagellar brake protein YcgR.